Consider the following 511-residue polypeptide: Maturase K (511 aa).

The protein belongs to the intron maturase 2 family. MatK subfamily.

It localises to the plastid. It is found in the chloroplast. In terms of biological role, usually encoded in the trnK tRNA gene intron. Probably assists in splicing its own and other chloroplast group II introns. This Brachypodium distachyon (Purple false brome) protein is Maturase K.